Here is a 298-residue protein sequence, read N- to C-terminus: UDP-N-acetylenolpyruvoylglucosamine reductase (298 aa).

The region spanning 26–191 (KTGGPADWLA…LDATFALEPG (166 aa)) is the FAD-binding PCMH-type domain. Residue R170 is part of the active site. Catalysis depends on S220, which acts as the Proton donor. Residue E290 is part of the active site.

The protein belongs to the MurB family. The cofactor is FAD.

It localises to the cytoplasm. It carries out the reaction UDP-N-acetyl-alpha-D-muramate + NADP(+) = UDP-N-acetyl-3-O-(1-carboxyvinyl)-alpha-D-glucosamine + NADPH + H(+). The protein operates within cell wall biogenesis; peptidoglycan biosynthesis. Functionally, cell wall formation. This is UDP-N-acetylenolpyruvoylglucosamine reductase from Limosilactobacillus reuteri subsp. reuteri (strain JCM 1112) (Lactobacillus reuteri).